The primary structure comprises 428 residues: Glutamyl-tRNA reductase (428 aa).

Substrate is bound by residues 49–52, S109, 114–116, and Q120; these read TCNR and EGQ. C50 acts as the Nucleophile in catalysis. 189–194 provides a ligand contact to NADP(+); that stretch reads GAGKMA.

This sequence belongs to the glutamyl-tRNA reductase family. Homodimer.

It catalyses the reaction (S)-4-amino-5-oxopentanoate + tRNA(Glu) + NADP(+) = L-glutamyl-tRNA(Glu) + NADPH + H(+). It functions in the pathway porphyrin-containing compound metabolism; protoporphyrin-IX biosynthesis; 5-aminolevulinate from L-glutamyl-tRNA(Glu): step 1/2. It participates in porphyrin-containing compound metabolism; chlorophyll biosynthesis. Catalyzes the NADPH-dependent reduction of glutamyl-tRNA(Glu) to glutamate 1-semialdehyde (GSA). The protein is Glutamyl-tRNA reductase of Rippkaea orientalis (strain PCC 8801 / RF-1) (Cyanothece sp. (strain PCC 8801)).